Consider the following 367-residue polypeptide: Homeobox protein Nkx-6.1 (367 aa).

A disordered region spans residues 36 to 133 (YPAAYPPLPA…SSSSSSSASA (98 aa)). Composition is skewed to low complexity over residues 48–59 (PSSSSSSSSSSS), 78–91 (GGLSSLGSPPQQLS), and 110–133 (ASGAALPSASPSGSSSSSSSSASA). The segment at 102 to 268 (LSRPSMPVAS…KYLAGPERAR (167 aa)) is repressor domain. Arginine 189 is modified (asymmetric dimethylarginine). A DNA-binding region (homeobox) is located at residues 236–295 (RKHTRPTFSGQQIFALEKTFEQTKYLAGPERARLAYSLGMTESQVKVWFQNRRTKWRKKH). The segment at 294 to 367 (KHAAEMATAK…LHASEPESSS (74 aa)) is disordered. A compositionally biased stretch (basic and acidic residues) spans 304–317 (KKQDSETERLKGAS). The segment at 306 to 367 (QDSETERLKG…LHASEPESSS (62 aa)) is involved in DNA-binding.

As to expression, pancreatic beta cells.

It is found in the nucleus. Transcription factor which binds to specific A/T-rich DNA sequences in the promoter regions of a number of genes. Involved in the development of insulin-producing beta cells in the islets of Langerhans at the secondary transition. Together with NKX2-2 and IRX3 acts to restrict the generation of motor neurons to the appropriate region of the neural tube. Belongs to the class II proteins of neuronal progenitor factors, which are induced by SHH signals. This chain is Homeobox protein Nkx-6.1 (NKX6-1), found in Homo sapiens (Human).